A 500-amino-acid polypeptide reads, in one-letter code: Maturase K (500 aa).

This sequence belongs to the intron maturase 2 family. MatK subfamily.

The protein resides in the plastid. It localises to the chloroplast. Its function is as follows. Usually encoded in the trnK tRNA gene intron. Probably assists in splicing its own and other chloroplast group II introns. The protein is Maturase K of Fragaria vesca (Woodland strawberry).